The chain runs to 171 residues: Lipoprotein signal peptidase (171 aa).

The next 4 helical transmembrane spans lie at 15-35 (WLWL…IVMD), 47-67 (VLPF…SFLS), 72-92 (WQRW…AYWM), and 107-127 (ALII…GFVV). Catalysis depends on residues Asp128 and Asp146. A helical transmembrane segment spans residues 141-161 (AFNLADSTICIGAAMIILDGF).

The protein belongs to the peptidase A8 family.

The protein localises to the cell inner membrane. It catalyses the reaction Release of signal peptides from bacterial membrane prolipoproteins. Hydrolyzes -Xaa-Yaa-Zaa-|-(S,diacylglyceryl)Cys-, in which Xaa is hydrophobic (preferably Leu), and Yaa (Ala or Ser) and Zaa (Gly or Ala) have small, neutral side chains.. It participates in protein modification; lipoprotein biosynthesis (signal peptide cleavage). Its function is as follows. This protein specifically catalyzes the removal of signal peptides from prolipoproteins. The sequence is that of Lipoprotein signal peptidase from Vibrio cholerae serotype O1 (strain ATCC 39315 / El Tor Inaba N16961).